A 367-amino-acid chain; its full sequence is Undecaprenyl-phosphate alpha-N-acetylglucosaminyl 1-phosphate transferase (367 aa).

A run of 10 helical transmembrane segments spans residues 3-23, 46-66, 69-89, 132-152, 158-178, 187-207, 213-233, 242-262, 294-314, and 318-338; these read LLTVSTDLISIFLFTTLFLFF, LIPLVGGISVYAGICFTFGIV, YIPHASLYLACAGVLVFIGAL, VLGPFGYFLTLFAVWAAINAF, IDGLLGGLSCVSFAAIGMILW, IWCFAMIAAILPYIMLNLGIL, VFMGDAGSTLIGFTVIWILLE, ISPVTALWIIAIPLMDMVAIM, AFVLITLAAALLASIGVLAEY, and VPEWVMLVLFLLAFFLYGYCI.

This sequence belongs to the glycosyltransferase 4 family. WecA subfamily. Mg(2+) serves as cofactor. Requires Mn(2+) as cofactor.

It localises to the cell inner membrane. The catalysed reaction is di-trans,octa-cis-undecaprenyl phosphate + UDP-N-acetyl-alpha-D-glucosamine = N-acetyl-alpha-D-glucosaminyl-di-trans,octa-cis-undecaprenyl diphosphate + UMP. It participates in bacterial outer membrane biogenesis; LPS O-antigen biosynthesis. Its pathway is bacterial outer membrane biogenesis; enterobacterial common antigen biosynthesis. In terms of biological role, catalyzes the transfer of the GlcNAc-1-phosphate moiety from UDP-GlcNAc onto the carrier lipid undecaprenyl phosphate (C55-P), yielding GlcNAc-pyrophosphoryl-undecaprenyl (GlcNAc-PP-C55). The protein is Undecaprenyl-phosphate alpha-N-acetylglucosaminyl 1-phosphate transferase of Escherichia coli O6:H1 (strain CFT073 / ATCC 700928 / UPEC).